The chain runs to 116 residues: Phosphoribosyl-AMP cyclohydrolase (116 aa).

A Mg(2+)-binding site is contributed by aspartate 85. Residue cysteine 86 coordinates Zn(2+). The Mg(2+) site is built by aspartate 87 and aspartate 89. Residues cysteine 102 and cysteine 109 each coordinate Zn(2+).

This sequence belongs to the PRA-CH family. As to quaternary structure, homodimer. Mg(2+) is required as a cofactor. Requires Zn(2+) as cofactor.

It is found in the cytoplasm. It catalyses the reaction 1-(5-phospho-beta-D-ribosyl)-5'-AMP + H2O = 1-(5-phospho-beta-D-ribosyl)-5-[(5-phospho-beta-D-ribosylamino)methylideneamino]imidazole-4-carboxamide. It functions in the pathway amino-acid biosynthesis; L-histidine biosynthesis; L-histidine from 5-phospho-alpha-D-ribose 1-diphosphate: step 3/9. Functionally, catalyzes the hydrolysis of the adenine ring of phosphoribosyl-AMP. This Thermobifida fusca (strain YX) protein is Phosphoribosyl-AMP cyclohydrolase.